The chain runs to 375 residues: Alanine racemase (375 aa).

K38 functions as the Proton acceptor; specific for D-alanine in the catalytic mechanism. N6-(pyridoxal phosphate)lysine is present on K38. Substrate is bound at residue R137. Residue Y266 is the Proton acceptor; specific for L-alanine of the active site. M314 contributes to the substrate binding site.

This sequence belongs to the alanine racemase family. Pyridoxal 5'-phosphate is required as a cofactor.

The enzyme catalyses L-alanine = D-alanine. It participates in amino-acid biosynthesis; D-alanine biosynthesis; D-alanine from L-alanine: step 1/1. Functionally, catalyzes the interconversion of L-alanine and D-alanine. May also act on other amino acids. The protein is Alanine racemase (alr) of Cutibacterium acnes (strain DSM 16379 / KPA171202) (Propionibacterium acnes).